The chain runs to 62 residues: MPPKIHPSLSTGYFVSLDTMPPKNLCHQKVCHLGMKADLFALLKHAEIMKHIASFNVSVHGV.

This is an uncharacterized protein from Caenorhabditis elegans.